The sequence spans 1311 residues: Clustered mitochondria protein homolog (1311 aa).

The disordered stretch occupies residues 1 to 46; that stretch reads MAATNEVIPTSENPSDVSGSSQKLATEETALANGVDHEEEDSGEAG. A compositionally biased stretch (polar residues) spans 7–24; sequence VIPTSENPSDVSGSSQKL. The 245-residue stretch at 335–579 folds into the Clu domain; sequence DITRTQENYL…RVTPLDITWM (245 aa). Disordered regions lie at residues 629 to 691 and 915 to 965; these read ERKR…QERI and QSQT…VNAS. Basic and acidic residues predominate over residues 655 to 691; that stretch reads EASKSDEPTENGELAKKADESDKDAEPSKPAADQERI. Residues 915–930 are compositionally biased toward polar residues; it reads QSQTEAAAAPPTTNGE. TPR repeat units follow at residues 1034–1067, 1076–1109, and 1118–1151; these read ARVYNSLSMLYYQLDEKEAAMELARKAVIVSERT, LLNYLNLGLIAHASGETKLALTYIKHALDLWKVV, and ITTINNAAVMLQHLKEYHDSRTWFEASLKICEEV. The disordered stretch occupies residues 1236–1311; that stretch reads VSPRVTLGQT…RGGAAAAAGK (76 aa). Residues 1242–1253 are compositionally biased toward polar residues; sequence LGQTQLQPQVGQ. The span at 1259–1279 shows a compositional bias: basic and acidic residues; that stretch reads AGRDSRSSRGLDSRSIDELLK. The span at 1289–1303 shows a compositional bias: basic residues; that stretch reads KNKKRPGRSNPKRRG.

It belongs to the CLU family. In terms of assembly, may associate with the eukaryotic translation initiation factor 3 (eIF-3) complex.

It is found in the cytoplasm. Its function is as follows. mRNA-binding protein involved in proper cytoplasmic distribution of mitochondria. In Sclerotinia sclerotiorum (strain ATCC 18683 / 1980 / Ss-1) (White mold), this protein is Clustered mitochondria protein homolog.